The following is a 403-amino-acid chain: Beta-galactoside alpha-2,6-sialyltransferase 1 (403 aa).

Residues 1-9 (MIHTNLKRK) are Cytoplasmic-facing. Residues 10-26 (FSCFVLVFLLFAIICVW) traverse the membrane as a helical; Signal-anchor for type II membrane protein segment. The Lumenal segment spans residues 27–403 (KKGSDYEALT…TLSGFRNNRC (377 aa)). 3 cysteine pairs are disulfide-bonded: C139–C403, C181–C332, and C350–C361. N-linked (GlcNAc...) asparagine glycans are attached at residues N146 and N158. Substrate-binding positions include S186, N209, N230, 319 to 321 (SSG), C350, Y351, T362, Y366, H367, and K373. Phosphotyrosine is present on Y366.

It belongs to the glycosyltransferase 29 family. In terms of assembly, monomer and homodimer. Post-translationally, N-glycosylated.

The protein resides in the golgi apparatus. The protein localises to the golgi stack membrane. It localises to the secreted. The catalysed reaction is a beta-D-galactoside + CMP-N-acetyl-beta-neuraminate = an N-acetyl-alpha-neuraminyl-(2-&gt;6)-beta-D-galactosyl derivative + CMP + H(+). It participates in protein modification; protein glycosylation. Functionally, transfers sialic acid from CMP-sialic acid to galactose-containing acceptor substrates. In Mus musculus (Mouse), this protein is Beta-galactoside alpha-2,6-sialyltransferase 1 (St6gal1).